The primary structure comprises 306 residues: Curved DNA-binding protein (306 aa).

The 65-residue stretch at 5-69 (DYYAIMGVKP…QRRAEYDQMW (65 aa)) folds into the J domain.

It localises to the cytoplasm. The protein resides in the nucleoid. In terms of biological role, DNA-binding protein that preferentially recognizes a curved DNA sequence. It is probably a functional analog of DnaJ; displays overlapping activities with DnaJ, but functions under different conditions, probably acting as a molecular chaperone in an adaptive response to environmental stresses other than heat shock. Lacks autonomous chaperone activity; binds native substrates and targets them for recognition by DnaK. Its activity is inhibited by the binding of CbpM. In Escherichia coli (strain K12 / MC4100 / BW2952), this protein is Curved DNA-binding protein.